Reading from the N-terminus, the 308-residue chain is Transaldolase (308 aa).

The active-site Schiff-base intermediate with substrate is Lys-125.

This sequence belongs to the transaldolase family. Type 1 subfamily. In terms of assembly, homodimer.

The protein localises to the cytoplasm. The enzyme catalyses D-sedoheptulose 7-phosphate + D-glyceraldehyde 3-phosphate = D-erythrose 4-phosphate + beta-D-fructose 6-phosphate. It participates in carbohydrate degradation; pentose phosphate pathway; D-glyceraldehyde 3-phosphate and beta-D-fructose 6-phosphate from D-ribose 5-phosphate and D-xylulose 5-phosphate (non-oxidative stage): step 2/3. Its function is as follows. Transaldolase is important for the balance of metabolites in the pentose-phosphate pathway. This chain is Transaldolase, found in Pseudomonas putida (strain ATCC 47054 / DSM 6125 / CFBP 8728 / NCIMB 11950 / KT2440).